The following is a 371-amino-acid chain: Cytochrome b (371 aa).

Helical transmembrane passes span 25–45, 69–90, 105–125, and 170–190; these read FGSM…FLAI, WIMQ…YIHI, WLTG…GYVL, and FFAL…IHII. Residues His-75 and His-89 each contribute to the heme b site. His-174 and His-188 together coordinate heme b. Residue His-193 coordinates a ubiquinone. 4 helical membrane passes run 218–238, 280–300, 312–332, and 339–358; these read YKDL…LSFM, LGGA…PFTH, LAQT…WAAT, and FLLI…IMNP.

It belongs to the cytochrome b family. As to quaternary structure, the cytochrome bc1 complex contains 3 respiratory subunits (MT-CYB, CYC1 and UQCRFS1), 2 core proteins (UQCRC1 and UQCRC2) and probably 6 low-molecular weight proteins. The cofactor is heme b.

Its subcellular location is the mitochondrion inner membrane. Functionally, component of the ubiquinol-cytochrome c reductase complex (complex III or cytochrome b-c1 complex) that is part of the mitochondrial respiratory chain. The b-c1 complex mediates electron transfer from ubiquinol to cytochrome c. Contributes to the generation of a proton gradient across the mitochondrial membrane that is then used for ATP synthesis. The chain is Cytochrome b (MT-CYB) from Laticauda colubrina (Yellow-lipped sea krait).